A 500-amino-acid polypeptide reads, in one-letter code: L-2-amino-4-chloropent-4-enoate dechlorinase/desaturase (500 aa).

An N6-(pyridoxal phosphate)lysine modification is found at K311.

Belongs to the trans-sulfuration enzymes family. Requires pyridoxal 5'-phosphate as cofactor.

The enzyme catalyses L-2-amino-4-chloropent-4-enoate = L-propargylglycine + chloride + H(+). The protein operates within amino-acid metabolism. It participates in antibiotic biosynthesis. Involved in the biosynthesis of terminal alkyne-containing amino acids such as L-propargylglycine (Pra) and L-beta-ethynylserine, that are produced as antibiotics by S.cattleya. Catalyzes gamma-elimination of chloride from 4-chloro-allyl-L-glycine (also named L-2-amino-4-chloropent-4-enoate), followed by an isomerization, to form the terminal-alkyne product L-propargylglycine. This chain is L-2-amino-4-chloropent-4-enoate dechlorinase/desaturase, found in Streptantibioticus cattleyicolor (strain ATCC 35852 / DSM 46488 / JCM 4925 / NBRC 14057 / NRRL 8057) (Streptomyces cattleya).